A 199-amino-acid polypeptide reads, in one-letter code: Pyridoxine/pyridoxamine 5'-phosphate oxidase (199 aa).

FMN-binding positions include 44 to 49 (RTVLLK), 59 to 60 (YT), Lys-66, and Gln-91. Substrate is bound at residue Lys-49. Residues Tyr-109, Arg-113, and Ser-117 each coordinate substrate. Residues 126–127 (QS) and Trp-171 contribute to the FMN site. A substrate-binding site is contributed by 177–179 (RLH). Arg-181 is a binding site for FMN.

Belongs to the pyridoxamine 5'-phosphate oxidase family. As to quaternary structure, homodimer. It depends on FMN as a cofactor.

It carries out the reaction pyridoxamine 5'-phosphate + O2 + H2O = pyridoxal 5'-phosphate + H2O2 + NH4(+). It catalyses the reaction pyridoxine 5'-phosphate + O2 = pyridoxal 5'-phosphate + H2O2. It participates in cofactor metabolism; pyridoxal 5'-phosphate salvage; pyridoxal 5'-phosphate from pyridoxamine 5'-phosphate: step 1/1. The protein operates within cofactor metabolism; pyridoxal 5'-phosphate salvage; pyridoxal 5'-phosphate from pyridoxine 5'-phosphate: step 1/1. In terms of biological role, catalyzes the oxidation of either pyridoxine 5'-phosphate (PNP) or pyridoxamine 5'-phosphate (PMP) into pyridoxal 5'-phosphate (PLP). In Xanthomonas axonopodis pv. citri (strain 306), this protein is Pyridoxine/pyridoxamine 5'-phosphate oxidase.